A 1221-amino-acid chain; its full sequence is DNA replication helicase (1221 aa).

The short motif at 692-701 is the Nuclear localization signal element; the sequence is PKCKCYKKIK. Residue 917–924 participates in ATP binding; sequence GEPGSGKS. The H-T-H motif DNA-binding region spans 967-981; the sequence is INELKQCSESYFKKH.

As to quaternary structure, interacts with IE1 and LEF-3.

It is found in the host nucleus. It catalyses the reaction ATP + H2O = ADP + phosphate + H(+). Essential for initiation of viral DNA replication, it may contribute to other functions such as controlling the switch to the late phase and leading to the inhibition of host protein synthesis. Required for late and very late gene expression. The polypeptide is DNA replication helicase (HELI) (Lepidoptera (butterflies and moths)).